The sequence spans 431 residues: Nuclear envelope integral membrane protein 1 (431 aa).

The first 29 residues, 1 to 29 (MAGEVEGEGCRVSWGVLVALLLLPLPSLC), serve as a signal peptide directing secretion. 5 consecutive transmembrane segments (helical) span residues 151 to 171 (PRLF…DTLS), 175 to 195 (IFYY…ILVF), 206 to 226 (PFVA…QLVF), 236 to 256 (YWQY…AFCY), and 266 to 286 (SINI…YISV). Positions 176–287 (FYYSTGITVG…GLLLMYISVQ (112 aa)) are a; required for its colocalization with lamins at the nuclear envelope. The Nuclear localization signal signature appears at 317–325 (RKIKLKRGK). The interval 326 to 395 (PSPPRLLTEE…LTPNEVSVHE (70 aa)) is b; required for interaction with ran. The interval 326-431 (PSPPRLLTEE…IEPVLYQDLR (106 aa)) is interaction with banf1-a and banf1-b. A BAF-binding site (BBS); essential for interaction with banf1-a, banf1-b and ran region spans residues 368–375 (SRIQSPKR).

This sequence belongs to the NEMP family. As to quaternary structure, homooligomer. Interacts with banf1-a and banf1-b. Interacts with ran-gtp. Post-translationally, phosphorylated.

It is found in the nucleus inner membrane. The protein localises to the nucleus envelope. In concert with ran, required for proper eye development. May be involved in the expression of early eye marker genes. Contributes to nuclear envelope stiffness in germ cells. Required for fertility. Essential for normal erythropoiesis. Required for efficient nuclear envelope opening and enucleation during the late stages of erythroblast maturation. The protein is Nuclear envelope integral membrane protein 1 (nemp1) of Xenopus tropicalis (Western clawed frog).